Here is a 389-residue protein sequence, read N- to C-terminus: S-adenosylmethionine synthase (389 aa).

His17 lines the ATP pocket. Position 19 (Asp19) interacts with Mg(2+). Glu45 is a binding site for K(+). The L-methionine site is built by Glu58 and Gln101. Residues 101–111 (QSPDIAQGVTE) are flexible loop. ATP is bound by residues 168–170 (DSK), 234–235 (RF), Asp243, 249–250 (RK), Ala266, and Lys270. Asp243 contacts L-methionine. L-methionine is bound at residue Lys274.

This sequence belongs to the AdoMet synthase family. Homotetramer; dimer of dimers. Mg(2+) is required as a cofactor. Requires K(+) as cofactor.

It is found in the cytoplasm. It catalyses the reaction L-methionine + ATP + H2O = S-adenosyl-L-methionine + phosphate + diphosphate. It functions in the pathway amino-acid biosynthesis; S-adenosyl-L-methionine biosynthesis; S-adenosyl-L-methionine from L-methionine: step 1/1. Catalyzes the formation of S-adenosylmethionine (AdoMet) from methionine and ATP. The overall synthetic reaction is composed of two sequential steps, AdoMet formation and the subsequent tripolyphosphate hydrolysis which occurs prior to release of AdoMet from the enzyme. The sequence is that of S-adenosylmethionine synthase from Geobacter sp. (strain M21).